The primary structure comprises 289 residues: tRNA pseudouridine synthase B (289 aa).

The Nucleophile role is filled by D55. Residues 243–289 (PGGVLAQHEREGSRALDSAAGNAEHDREEARIADNNREDRSRQHADR) are disordered. A compositionally biased stretch (basic and acidic residues) spans 265-289 (AEHDREEARIADNNREDRSRQHADR).

Belongs to the pseudouridine synthase TruB family. Type 1 subfamily.

It carries out the reaction uridine(55) in tRNA = pseudouridine(55) in tRNA. Responsible for synthesis of pseudouridine from uracil-55 in the psi GC loop of transfer RNAs. The sequence is that of tRNA pseudouridine synthase B from Chlorobium luteolum (strain DSM 273 / BCRC 81028 / 2530) (Pelodictyon luteolum).